A 1234-amino-acid chain; its full sequence is 1-phosphatidylinositol 4,5-bisphosphate phosphodiesterase beta-3 (1234 aa).

Ala2 carries the post-translational modification N-acetylalanine. In terms of domain architecture, PI-PLC X-box spans 315–466 (MDMTQPLSAY…LMGRILVKNK (152 aa)). Residues His330 and His377 contribute to the active site. The tract at residues 465-586 (NKKRHRPSTG…GTASSEVNAT (122 aa)) is disordered. A phosphoserine mark is found at Ser472, Ser488, Ser493, and Ser535. The segment covering 486–513 (EQSNSALSESSAATEPSSPQLGSPSSDS) has biased composition (low complexity). Residues 554–566 (REDEEEDEEEEET) show a composition bias toward acidic residues. The span at 577–586 (GTASSEVNAT) shows a compositional bias: polar residues. The 117-residue stretch at 589 to 705 (MSTLVNYVEP…GYLLKPEFMR (117 aa)) folds into the PI-PLC Y-box domain. Residues 706-834 (RPDKSFDPFT…RNEANQPLCL (129 aa)) form the C2 domain. Over residues 886–907 (ASTEMCQETPSQQQGSQLSSNP) the composition is skewed to polar residues. The disordered stretch occupies residues 886 to 936 (ASTEMCQETPSQQQGSQLSSNPVPNPLDDSPRWPPGPTTSPTSTSLSSPGQ). Positions 924 to 934 (TSPTSTSLSSP) are enriched in low complexity. Ser925 and Ser1105 each carry phosphoserine. Residues 1196 to 1234 (SEGLGDGPLVACASNGHAAGSGGHQSGADSESQEENTQL) form a disordered region. Residues 1231-1234 (NTQL) form an interaction with SHANK2 region.

As to quaternary structure, interacts with LPAR2. Interacts with SHANK2. Requires Ca(2+) as cofactor. As to expression, expressed in parotid gland, brain, liver, uterus, lung, heart, adrenal gland, and ovary. Not detected in spleen, pancreas, intestine, thymus or kidney.

Its subcellular location is the cytoplasm. The protein resides in the membrane. The protein localises to the nucleus. The catalysed reaction is a 1,2-diacyl-sn-glycero-3-phospho-(1D-myo-inositol-4,5-bisphosphate) + H2O = 1D-myo-inositol 1,4,5-trisphosphate + a 1,2-diacyl-sn-glycerol + H(+). The enzyme catalyses a 1,2-diacyl-sn-glycero-3-phospho-(1D-myo-inositol) + H2O = 1D-myo-inositol 1-phosphate + a 1,2-diacyl-sn-glycerol + H(+). Its activity is regulated as follows. Activated by G(q)/G(11) G alpha proteins in response to ligand-binding to G protein-coupled receptors. Its function is as follows. Catalyzes the production of the second messenger molecules diacylglycerol (DAG) and inositol 1,4,5-trisphosphate (IP3). Key transducer of G protein-coupled receptor signaling: activated by G(q)/G(11) G alpha proteins downstream of G protein-coupled receptors activation. In neutrophils, participates in a phospholipase C-activating N-formyl peptide-activated GPCR (G protein-coupled receptor) signaling pathway by promoting RASGRP4 activation by DAG, to promote neutrophil functional responses. The chain is 1-phosphatidylinositol 4,5-bisphosphate phosphodiesterase beta-3 from Rattus norvegicus (Rat).